The sequence spans 541 residues: Membrane protein insertase YidC (541 aa).

Residues 6–26 (SLLVLALIFISFLVYQQWQLD) traverse the membrane as a helical segment. The interval 34–56 (EQTTSITATSDVPASSPSNSQAI) is disordered. Helical transmembrane passes span 337–357 (FWLL…IICV), 416–436 (LGGC…YWTF), 454–474 (LSAQ…MFLL), and 495–515 (PLIF…YWLV).

Belongs to the OXA1/ALB3/YidC family. Type 1 subfamily. As to quaternary structure, interacts with the Sec translocase complex via SecD. Specifically interacts with transmembrane segments of nascent integral membrane proteins during membrane integration.

The protein localises to the cell inner membrane. In terms of biological role, required for the insertion and/or proper folding and/or complex formation of integral membrane proteins into the membrane. Involved in integration of membrane proteins that insert both dependently and independently of the Sec translocase complex, as well as at least some lipoproteins. Aids folding of multispanning membrane proteins. This is Membrane protein insertase YidC from Haemophilus influenzae (strain PittEE).